The following is a 407-amino-acid chain: MEAALKKLNIALQEAIDSFEGPLNQERLNELQTTESLPNKEVWSLASQTIDLADKIIHRLQPPSLQLAESFLAYLDTKCLWAAVSHDIPDLITAGGPQTVQELAKKSGLQSIRLKQVMRVLHNNGIFEYKPTTQKYSNTPSSTLLAKDHWTQWHLWVDLYGNEHYKAAEGIPDAIREGQTRCAAQIQYDTDESMFRYFARNGLQEKFHKTLGAGAVAQAPGMMADYNWGELDDAVVLDIGGGGGDFITSLLREHPSMRGGLFELDSVIEMVRPKYRDASGEFADVGDRMVDLHVGDFRVEVPAYEVYTMKWCLHNWLDEDVVKILSAVRRAIKVTPRARMVVVESVLKDGRSSRIWRFGDLTMMAGANGQEREEEDWRGLAAKTGWNIHSISPLRNAWAAAIDLRPC.

Residues Glu263 and 295–297 (GDF) each bind S-adenosyl-L-methionine. The active-site Proton acceptor is the His314.

The protein belongs to the class I-like SAM-binding methyltransferase superfamily. Cation-independent O-methyltransferase family.

Its pathway is mycotoxin biosynthesis. Functionally, O-methyltransferase; part of the gene cluster that mediates the biosynthesis of 11'-deoxyverticillin A, one of the dimeric epipolythiodioxopiperazines (ETPs) from the verticillin family that act as mycotoxins. 11'-deoxyverticillin A is required for normal conidiation. The nonribosomal peptide synthetase verP is speculated to be responsible for condensation of amino acids to form the carbon skeleton of verticillin, whereas the cluster-specific tailoring enzymes are involved in further modifications leading to the production of 11'-deoxyverticillin A. The polypeptide is O-methyltransferase verK (Clonostachys rogersoniana).